The sequence spans 142 residues: Ribosome maturation factor RimP (142 aa).

Belongs to the RimP family.

It is found in the cytoplasm. Required for maturation of 30S ribosomal subunits. This chain is Ribosome maturation factor RimP, found in Aromatoleum aromaticum (strain DSM 19018 / LMG 30748 / EbN1) (Azoarcus sp. (strain EbN1)).